Reading from the N-terminus, the 249-residue chain is DNA repair protein RecO (249 aa).

Belongs to the RecO family.

Its function is as follows. Involved in DNA repair and RecF pathway recombination. The sequence is that of DNA repair protein RecO from Rhodopseudomonas palustris (strain HaA2).